A 646-amino-acid chain; its full sequence is ATP-dependent zinc metalloprotease FtsH (646 aa).

Topologically, residues 1–4 (MTRS) are cytoplasmic. A helical transmembrane segment spans residues 5-25 (LLWQMVIVLGAILMVNYVLTT). At 26 to 120 (LTPQTQEPVV…VRPESKPSPW (95 aa)) the chain is on the periplasmic side. The chain crosses the membrane as a helical span at residues 121-141 (ATAMIYMLPWLLIVGVWWFVI). Topologically, residues 142–646 (KGMRTRQGPG…GELAGGAVEG (505 aa)) are cytoplasmic. Residue 216 to 223 (GPPGTGKT) coordinates ATP. His437 is a Zn(2+) binding site. Residue Glu438 is part of the active site. Zn(2+) is bound by residues His441 and Asp513.

This sequence in the central section; belongs to the AAA ATPase family. The protein in the C-terminal section; belongs to the peptidase M41 family. Homohexamer. It depends on Zn(2+) as a cofactor.

The protein resides in the cell inner membrane. Acts as a processive, ATP-dependent zinc metallopeptidase for both cytoplasmic and membrane proteins. Plays a role in the quality control of integral membrane proteins. The sequence is that of ATP-dependent zinc metalloprotease FtsH from Syntrophotalea carbinolica (strain DSM 2380 / NBRC 103641 / GraBd1) (Pelobacter carbinolicus).